The primary structure comprises 173 residues: Lipoprotein signal peptidase (173 aa).

Helical transmembrane passes span 14–34 (LAWL…KYYF), 44–64 (IIVI…AAFS), 72–92 (WQRW…VVWL), and 98–118 (DDTW…GNLY). Catalysis depends on residues D128 and D147. Residues 139–159 (YFPAFNVADSAITVGAIMLAL) traverse the membrane as a helical segment.

It belongs to the peptidase A8 family.

The protein resides in the cell inner membrane. It catalyses the reaction Release of signal peptides from bacterial membrane prolipoproteins. Hydrolyzes -Xaa-Yaa-Zaa-|-(S,diacylglyceryl)Cys-, in which Xaa is hydrophobic (preferably Leu), and Yaa (Ala or Ser) and Zaa (Gly or Ala) have small, neutral side chains.. Its pathway is protein modification; lipoprotein biosynthesis (signal peptide cleavage). In terms of biological role, this protein specifically catalyzes the removal of signal peptides from prolipoproteins. This is Lipoprotein signal peptidase from Pseudomonas syringae pv. tomato (strain ATCC BAA-871 / DC3000).